A 324-amino-acid polypeptide reads, in one-letter code: Arginase (324 aa).

Positions 115, 143, 145, and 147 each coordinate Mn(2+). Substrate-binding positions include 145-149, 156-158, and Asp-202; these read HADIN and SGN. 2 residues coordinate Mn(2+): Asp-249 and Asp-251. Residues Thr-263 and Glu-294 each contribute to the substrate site.

It belongs to the arginase family. In terms of assembly, homotrimer. The cofactor is Mn(2+).

The enzyme catalyses L-arginine + H2O = urea + L-ornithine. The protein operates within nitrogen metabolism; urea cycle; L-ornithine and urea from L-arginine: step 1/1. The chain is Arginase (agaA) from Emericella nidulans (strain FGSC A4 / ATCC 38163 / CBS 112.46 / NRRL 194 / M139) (Aspergillus nidulans).